The sequence spans 1165 residues: Chitin synthase 3 (1165 aa).

Over 1 to 170 (MTGLNGDDPD…ETNDTLSFWQ (170 aa)) the chain is Cytoplasmic. Disordered regions lie at residues 19 to 53 (DEES…NNPD) and 74 to 97 (PSST…GSVR). The segment covering 74 to 92 (PSSTGVNPNATRRSGSLRS) has biased composition (polar residues). Lysine 136 is covalently cross-linked (Glycyl lysine isopeptide (Lys-Gly) (interchain with G-Cter in ubiquitin)). Residues 171-191 (MYCYFITFWAPAPILAFCGMP) form a helical membrane-spanning segment. Topologically, residues 192–340 (KKERQMAWRE…PNFTVENYAG (149 aa)) are extracellular. Asparagine 303 and asparagine 332 each carry an N-linked (GlcNAc...) asparagine glycan. Residues 341–354 (WNCHTSKEDRDAFY) form a helical membrane-spanning segment. The Cytoplasmic segment spans residues 355 to 452 (GLKSKADVYF…SKTVGCIASD (98 aa)). The helical transmembrane segment at 453–473 (VVLYVSLVFILSVVIIKFIIA) threads the bilayer. Residues 474–891 (CYFRWTVARK…EYYISHHQAK (418 aa)) lie on the Extracellular side of the membrane. At serine 537 the chain carries Phosphoserine. Threonine 538 is subject to Phosphothreonine. The chain crosses the membrane as a helical span at residues 892–910 (AFESVFGSVTCLPGCFSMY). Topologically, residues 911 to 1029 (RIKSPKGSDG…SMQFVIGIEL (119 aa)) are cytoplasmic. Residues 1030–1050 (IGTMVLPLAICFTIYVIIFAI) form a helical membrane-spanning segment. Residues 1051-1055 (VSKPT) lie on the Extracellular side of the membrane. A helical membrane pass occupies residues 1056–1076 (PVITLVLLAIILGLPGLIVVI). At 1077 to 1165 (TATRWSYLWW…RKEESDSFVA (89 aa)) the chain is on the cytoplasmic side.

It belongs to the chitin synthase family. Class IV subfamily. As to quaternary structure, homodimer. May form higher order oligomers. Seems to interact with BNI4 and SKT5 which link CHS3 to septins. Glycosylated. In terms of processing, palmitoylated by PFA4; required for proper export from the ER.

It is found in the cell membrane. The protein resides in the bud neck. Its subcellular location is the cytoplasmic vesicle membrane. The enzyme catalyses [(1-&gt;4)-N-acetyl-beta-D-glucosaminyl](n) + UDP-N-acetyl-alpha-D-glucosamine = [(1-&gt;4)-N-acetyl-beta-D-glucosaminyl](n+1) + UDP + H(+). Its function is as follows. Polymerizes chitin, a structural polymer of the cell wall and septum, by transferring the sugar moiety of UDP-GlcNAc to the non-reducing end of the growing chitin polymer. Appears to be responsible for synthesis of the majority of the chitin found in the cell wall periphery. It is involved in the synthesis of the chitin ring that forms in the cell wall just before bud emergence. This ring remains at the base of the bud as the bud grows and ultimately forms part of the bud scar marking the division site on the mother cell. Also catalyzes the synthesis of chitin laid down during mating and spore cell-wall synthesis. In Saccharomyces cerevisiae (strain ATCC 204508 / S288c) (Baker's yeast), this protein is Chitin synthase 3.